The following is a 360-amino-acid chain: Ribosomal RNA large subunit methyltransferase M (360 aa).

S-adenosyl-L-methionine contacts are provided by residues Ser-187, 220–223 (CPGG), Asp-239, Asp-259, and Asp-276. The active-site Proton acceptor is the Lys-305.

The protein belongs to the class I-like SAM-binding methyltransferase superfamily. RNA methyltransferase RlmE family. RlmM subfamily. As to quaternary structure, monomer.

The protein resides in the cytoplasm. The catalysed reaction is cytidine(2498) in 23S rRNA + S-adenosyl-L-methionine = 2'-O-methylcytidine(2498) in 23S rRNA + S-adenosyl-L-homocysteine + H(+). Functionally, catalyzes the 2'-O-methylation at nucleotide C2498 in 23S rRNA. This is Ribosomal RNA large subunit methyltransferase M from Shewanella sediminis (strain HAW-EB3).